The sequence spans 119 residues: Small ribosomal subunit protein bS6 (119 aa).

The tract at residues 96–119 (VTEPSPLARSQEKDEEEGGRTAEA) is disordered.

It belongs to the bacterial ribosomal protein bS6 family.

In terms of biological role, binds together with bS18 to 16S ribosomal RNA. The chain is Small ribosomal subunit protein bS6 from Alkalilimnicola ehrlichii (strain ATCC BAA-1101 / DSM 17681 / MLHE-1).